The primary structure comprises 489 residues: UDP-N-acetylmuramate--L-alanine ligase (489 aa).

128–134 (GTHGKTT) lines the ATP pocket.

It belongs to the MurCDEF family.

It is found in the cytoplasm. The enzyme catalyses UDP-N-acetyl-alpha-D-muramate + L-alanine + ATP = UDP-N-acetyl-alpha-D-muramoyl-L-alanine + ADP + phosphate + H(+). The protein operates within cell wall biogenesis; peptidoglycan biosynthesis. Functionally, cell wall formation. The polypeptide is UDP-N-acetylmuramate--L-alanine ligase (Shewanella woodyi (strain ATCC 51908 / MS32)).